A 197-amino-acid chain; its full sequence is Probable nicotinate-nucleotide adenylyltransferase (197 aa).

This sequence belongs to the NadD family.

The enzyme catalyses nicotinate beta-D-ribonucleotide + ATP + H(+) = deamido-NAD(+) + diphosphate. The protein operates within cofactor biosynthesis; NAD(+) biosynthesis; deamido-NAD(+) from nicotinate D-ribonucleotide: step 1/1. Its function is as follows. Catalyzes the reversible adenylation of nicotinate mononucleotide (NaMN) to nicotinic acid adenine dinucleotide (NaAD). The chain is Probable nicotinate-nucleotide adenylyltransferase from Pseudothermotoga lettingae (strain ATCC BAA-301 / DSM 14385 / NBRC 107922 / TMO) (Thermotoga lettingae).